A 397-amino-acid chain; its full sequence is Riboflavin biosynthesis protein RibBA (397 aa).

The tract at residues 1–199 (MFHRIEEALE…IEDLIAYRRH (199 aa)) is DHBP synthase. Residues 26–27 (RE), Asp-31, 138–142 (RAGHT), and Glu-162 each bind D-ribulose 5-phosphate. Position 27 (Glu-27) interacts with Mg(2+). His-141 serves as a coordination point for Mg(2+). Residues 200–397 (HETFVTKEVE…VTKLGHLLNL (198 aa)) are GTP cyclohydrolase II. 250–254 (RVHSE) contributes to the GTP binding site. Residues Cys-255, Cys-266, and Cys-268 each coordinate Zn(2+). Residues Gln-271, 293–295 (EGR), and Thr-315 each bind GTP. The active-site Proton acceptor; for GTP cyclohydrolase activity is the Asp-327. The active-site Nucleophile; for GTP cyclohydrolase activity is Arg-329. Thr-350 and Lys-355 together coordinate GTP.

In the N-terminal section; belongs to the DHBP synthase family. The protein in the C-terminal section; belongs to the GTP cyclohydrolase II family. The cofactor is Mg(2+). Mn(2+) serves as cofactor. Requires Zn(2+) as cofactor.

The catalysed reaction is D-ribulose 5-phosphate = (2S)-2-hydroxy-3-oxobutyl phosphate + formate + H(+). It carries out the reaction GTP + 4 H2O = 2,5-diamino-6-hydroxy-4-(5-phosphoribosylamino)-pyrimidine + formate + 2 phosphate + 3 H(+). It participates in cofactor biosynthesis; riboflavin biosynthesis; 2-hydroxy-3-oxobutyl phosphate from D-ribulose 5-phosphate: step 1/1. The protein operates within cofactor biosynthesis; riboflavin biosynthesis; 5-amino-6-(D-ribitylamino)uracil from GTP: step 1/4. In terms of biological role, catalyzes the conversion of D-ribulose 5-phosphate to formate and 3,4-dihydroxy-2-butanone 4-phosphate. Its function is as follows. Catalyzes the conversion of GTP to 2,5-diamino-6-ribosylamino-4(3H)-pyrimidinone 5'-phosphate (DARP), formate and pyrophosphate. This Bacillus cytotoxicus (strain DSM 22905 / CIP 110041 / 391-98 / NVH 391-98) protein is Riboflavin biosynthesis protein RibBA.